The chain runs to 310 residues: Proline iminopeptidase (310 aa).

In terms of domain architecture, AB hydrolase-1 spans 33–290 (PVIFLHGGPG…RVVQAGHRAF (258 aa)). Residue serine 107 is the Nucleophile of the active site. Residue aspartate 260 is part of the active site. The active-site Proton donor is histidine 287.

The protein belongs to the peptidase S33 family.

The protein localises to the cytoplasm. The catalysed reaction is Release of N-terminal proline from a peptide.. Specifically catalyzes the removal of N-terminal proline residues from peptides. In Neisseria meningitidis serogroup B (strain ATCC BAA-335 / MC58), this protein is Proline iminopeptidase (pip).